Consider the following 546-residue polypeptide: CTP synthase (546 aa).

The tract at residues 1 to 266 (MTTNYIFVTG…DELVCKRFGI (266 aa)) is amidoligase domain. Ser14 contacts CTP. A UTP-binding site is contributed by Ser14. ATP is bound by residues 15 to 20 (SLGKGI) and Asp72. Asp72 and Glu140 together coordinate Mg(2+). Residues 147-149 (DIE), 187-192 (KTKPTQ), and Lys223 each bind CTP. UTP contacts are provided by residues 187-192 (KTKPTQ) and Lys223. 239–241 (RDV) serves as a coordination point for ATP. One can recognise a Glutamine amidotransferase type-1 domain in the interval 291 to 542 (TIGMVGKYIE…VKAAGEFQRG (252 aa)). Gly352 is an L-glutamine binding site. Catalysis depends on Cys379, which acts as the Nucleophile; for glutamine hydrolysis. Residues 380-383 (LGMQ), Glu403, and Arg470 contribute to the L-glutamine site. Active-site residues include His515 and Glu517.

This sequence belongs to the CTP synthase family. As to quaternary structure, homotetramer.

It carries out the reaction UTP + L-glutamine + ATP + H2O = CTP + L-glutamate + ADP + phosphate + 2 H(+). It catalyses the reaction L-glutamine + H2O = L-glutamate + NH4(+). The catalysed reaction is UTP + NH4(+) + ATP = CTP + ADP + phosphate + 2 H(+). It functions in the pathway pyrimidine metabolism; CTP biosynthesis via de novo pathway; CTP from UDP: step 2/2. Its activity is regulated as follows. Allosterically activated by GTP, when glutamine is the substrate; GTP has no effect on the reaction when ammonia is the substrate. The allosteric effector GTP functions by stabilizing the protein conformation that binds the tetrahedral intermediate(s) formed during glutamine hydrolysis. Inhibited by the product CTP, via allosteric rather than competitive inhibition. Its function is as follows. Catalyzes the ATP-dependent amination of UTP to CTP with either L-glutamine or ammonia as the source of nitrogen. Regulates intracellular CTP levels through interactions with the four ribonucleotide triphosphates. This chain is CTP synthase, found in Vibrio atlanticus (strain LGP32) (Vibrio splendidus (strain Mel32)).